A 245-amino-acid chain; its full sequence is 1-acyl-sn-glycerol-3-phosphate acyltransferase (245 aa).

Met1 carries the N-formylmethionine modification. An HXXXXD motif motif is present at residues 73-78; sequence HQNNYD.

It belongs to the 1-acyl-sn-glycerol-3-phosphate acyltransferase family.

The protein localises to the cell inner membrane. The catalysed reaction is a 1-acyl-sn-glycero-3-phosphate + an acyl-CoA = a 1,2-diacyl-sn-glycero-3-phosphate + CoA. It catalyses the reaction a fatty acyl-[ACP] + a 1-acyl-sn-glycero-3-phosphate = a 1,2-diacyl-sn-glycero-3-phosphate + holo-[ACP]. The protein operates within phospholipid metabolism; CDP-diacylglycerol biosynthesis; CDP-diacylglycerol from sn-glycerol 3-phosphate: step 2/3. Converts lysophosphatidic acid (LPA) into phosphatidic acid by incorporating an acyl moiety at the 2 position. This enzyme can utilize either acyl-CoA or acyl-ACP as the fatty acyl donor. The sequence is that of 1-acyl-sn-glycerol-3-phosphate acyltransferase (plsC) from Escherichia coli (strain K12).